The following is a 132-amino-acid chain: Small ribosomal subunit protein uS8 (132 aa).

Belongs to the universal ribosomal protein uS8 family. In terms of assembly, part of the 30S ribosomal subunit. Contacts proteins S5 and S12.

Its function is as follows. One of the primary rRNA binding proteins, it binds directly to 16S rRNA central domain where it helps coordinate assembly of the platform of the 30S subunit. This chain is Small ribosomal subunit protein uS8, found in Bifidobacterium animalis subsp. lactis (strain AD011).